Here is a 476-residue protein sequence, read N- to C-terminus: Glycogen synthase (476 aa).

K15 provides a ligand contact to ADP-alpha-D-glucose.

The protein belongs to the glycosyltransferase 1 family. Bacterial/plant glycogen synthase subfamily.

The catalysed reaction is [(1-&gt;4)-alpha-D-glucosyl](n) + ADP-alpha-D-glucose = [(1-&gt;4)-alpha-D-glucosyl](n+1) + ADP + H(+). Its pathway is glycan biosynthesis; glycogen biosynthesis. Synthesizes alpha-1,4-glucan chains using ADP-glucose. The sequence is that of Glycogen synthase from Lactobacillus acidophilus (strain ATCC 700396 / NCK56 / N2 / NCFM).